Here is a 208-residue protein sequence, read N- to C-terminus: HTLV-1 basic zipper factor (208 aa).

A disordered region spans residues 59–93 (RLRWGPVGEEAPPRGETHRDRQRRAEEKRKRKRER). Basic and acidic residues predominate over residues 69-86 (APPRGETHRDRQRRAEEK). Short sequence motifs (nuclear localization signal) lie at residues 86–91 (KRKRKR), 115–119 (RRRRA), and 136–140 (RRERK). Residues 125–143 (DRARRKLEEEERRERKWRQ) are compositionally biased toward basic and acidic residues. A disordered region spans residues 125-160 (DRARRKLEEEERRERKWRQTEQGAKQRSARKEKMTE).

It belongs to the HTLV-1 HBZ protein family. As to quaternary structure, interacts with host ATF4; this interaction inhibits viral RNA transcriptional activation by preventing ATF4 binding to Tax-responsive elements. Interacts with host CREB1; this interaction inhibits host CREB1 transcriptional activity. Interacts with host JUN, JUNB and JUND. Interacts with host EP300.

The protein resides in the host nucleus. Contributes to the regulation of viral RNA transcription by interacting with host proteins involved in transcriptional activation such as ATF4, or CREB1, and by inhibiting their activity. Additionally, HBZ suppresses host NF-kappa-B-driven transcription mediated by host RELA as well as transcription of some classical NF-kappa-B target genes, including IL8, IL2RA, IRF4, VCAM1, and VEGFA. The polypeptide is HTLV-1 basic zipper factor (HBZ) (Human T-cell leukemia virus 1 (isolate Melanesia mel5 subtype C) (HTLV-1)).